The chain runs to 309 residues: GalNAc(5)-diNAcBac-PP-undecaprenol beta-1,3-glucosyltransferase (309 aa).

A helical membrane pass occupies residues 273–291; sequence SLSIKINAPALILLILSII.

The protein belongs to the glycosyltransferase 2 family.

The protein localises to the membrane. The catalysed reaction is [alpha-D-GalNAc-(1-&gt;4)]4-alpha-D-GalNAc-(1-&gt;3)-alpha-D-diNAcBac-tri-trans,hepta-cis-undecaprenyl diphosphate + UDP-alpha-D-glucose = [alpha-D-GalNAc-(1-&gt;4)]2-[beta-D-Glc-(1-&gt;3)]-[alpha-D-GalNAc-(1-&gt;4)]2-alpha-D-GalNAc-(1-&gt;3)-alpha-D-diNAcBac-tri-trans,hepta-cis-undecaprenyl diphosphate + UDP + H(+). It participates in protein modification; protein glycosylation. Its function is as follows. Glucosyltransferase that adds he final branching glucose to complete the final heptasaccharide structure in the N-linked protein glycosylation pathway. This is GalNAc(5)-diNAcBac-PP-undecaprenol beta-1,3-glucosyltransferase (pglI) from Campylobacter jejuni subsp. jejuni serotype O:2 (strain ATCC 700819 / NCTC 11168).